A 185-amino-acid chain; its full sequence is MHQPLTADLNPADEVVAVYDRTGNPIGRAPRSVVYSGGLWHASAGVLVRTGDGSRIYVHRRTDTKAVFGGYHDCLAGGVVDPGETPQETAIREVGEELGIFGTADQPLQLTEIARISWDGEWNNSPLRCHLFAFELRYDGPMAHQPSEIAEGWWWTPKELGAHLQDPSWPFVPDSRALLADYCWS.

Positions 39-177 constitute a Nudix hydrolase domain; the sequence is LWHASAGVLV…SWPFVPDSRA (139 aa). Positions 77-99 match the Nudix box motif; it reads GGVVDPGETPQETAIREVGEELG. The Mg(2+) site is built by E93 and E97.

It belongs to the Nudix hydrolase family. Mg(2+) serves as cofactor.

This is an uncharacterized protein from Rhodococcus erythropolis (Arthrobacter picolinophilus).